Here is a 339-residue protein sequence, read N- to C-terminus: Dipeptide transport system permease protein DppB (339 aa).

At Met-1–Leu-9 the chain is on the periplasmic side. The chain crosses the membrane as a helical span at residues Gly-10–Ile-30. The Cytoplasmic segment spans residues Pro-31–Leu-102. Residues Phe-96–Tyr-328 enclose the ABC transmembrane type-1 domain. A helical membrane pass occupies residues Gly-103–Val-123. The Periplasmic segment spans residues Lys-124–Gly-135. A helical transmembrane segment spans residues Leu-136–Val-156. Residues Ser-157–Asp-171 are Cytoplasmic-facing. The chain crosses the membrane as a helical span at residues Met-172–Trp-192. Residues Gly-193–Asp-200 are Periplasmic-facing. A helical membrane pass occupies residues Ala-201 to Val-221. The Cytoplasmic portion of the chain corresponds to Arg-222 to Ala-259. A helical transmembrane segment spans residues Met-260–Leu-280. Residues Thr-281–Gly-309 are Periplasmic-facing. A helical transmembrane segment spans residues Val-310–Val-330. Residues Val-331–Lys-339 are Cytoplasmic-facing.

Belongs to the binding-protein-dependent transport system permease family. OppBC subfamily. As to quaternary structure, the complex is composed of two ATP-binding proteins (DppD and DppF), two transmembrane proteins (DppB and DppC) and a solute-binding protein (DppA).

The protein resides in the cell inner membrane. Functionally, part of the ABC transporter DppABCDF involved in dipeptide transport. Responsible for the translocation of the substrate across the membrane. The sequence is that of Dipeptide transport system permease protein DppB (dppB) from Escherichia coli O157:H7.